Here is a 410-residue protein sequence, read N- to C-terminus: Neuroserpin (410 aa).

The N-terminal stretch at 1 to 16 is a signal peptide; it reads MTYLELLALLALQSVV. Asparagine 157, asparagine 321, and asparagine 401 each carry an N-linked (GlcNAc...) asparagine glycan. An O-linked (Xyl...) (chondroitin sulfate) serine glycan is attached at serine 403.

The protein belongs to the serpin family. In terms of tissue distribution, detected in neurons in embryonic brain cortex (at protein level). During embryonic development mostly expressed in CNS. In adult expressed in brain and much less in spinal cord, heart, kidney and testis.

It localises to the secreted. The protein localises to the cytoplasmic vesicle. Its subcellular location is the secretory vesicle lumen. It is found in the perikaryon. Functionally, serine protease inhibitor that inhibits plasminogen activators and plasmin but not thrombin. May be involved in the formation or reorganization of synaptic connections as well as for synaptic plasticity in the adult nervous system. May protect neurons from cell damage by tissue-type plasminogen activator. The sequence is that of Neuroserpin (Serpini1) from Mus musculus (Mouse).